Consider the following 294-residue polypeptide: Tetraspanin-15 (294 aa).

The Cytoplasmic segment spans residues 1 to 23; it reads MPRGDSEQVRYCARFSYLWLKFS. A helical transmembrane segment spans residues 24–44; sequence LIIYSTVFWLIGALVLSVGIY. At 45–62 the chain is on the extracellular side; the sequence is AEVERQKYKTLESAFLAP. The chain crosses the membrane as a helical span at residues 63–83; that stretch reads AIILILLGVVMFMVSFIGVLA. Over 84–93 the chain is Cytoplasmic; that stretch reads SLRDNLYLLQ. A helical membrane pass occupies residues 94–114; sequence AFMYILGICLIMELIGGVVAL. Residues 115 to 235 are Extracellular-facing; that stretch reads TFRNQTIDFL…WFMDNYTIMA (121 aa). N118 carries N-linked (GlcNAc...) asparagine glycosylation. 4 disulfide bridges follow: C154–C219, C155–C185, C171–C179, and C186–C198. Residues N189 and N230 are each glycosylated (N-linked (GlcNAc...) asparagine). The helical transmembrane segment at 236–256 threads the bilayer; the sequence is GILLGILLPQFLGVLLTLLYI. Over 257 to 294 the chain is Cytoplasmic; sequence TRVEDIIMEHSVTDGLLGPGAKPSVEAAGTGCCLCYPN.

Belongs to the tetraspanin (TM4SF) family. As to quaternary structure, interacts with ADAM10; the interaction influences ADAM10 substrate specificity, endocytosis and turnover. In terms of processing, palmitoylated.

It is found in the cell membrane. The protein localises to the late endosome membrane. In terms of biological role, part of TspanC8 subgroup, composed of 6 members that interact with the transmembrane metalloprotease ADAM10. This interaction is required for ADAM10 exit from the endoplasmic reticulum and for enzymatic maturation and trafficking to the cell surface as well as substrate specificity. Different TspanC8/ADAM10 complexes have distinct substrates. Promotes ADAM10-mediated cleavage of CDH2. Negatively regulates ligand-induced Notch activity probably by regulating ADAM10 activity. This chain is Tetraspanin-15, found in Homo sapiens (Human).